Reading from the N-terminus, the 213-residue chain is Membrane-spanning 4-domains subfamily A member 3 (213 aa).

Residues 1 to 26 (MKPEETGGSVYQPLDESRHVQRGVLQ) are Cytoplasmic-facing. Residues 27-47 (ALGAIQILNGILILALGIFLV) form a helical membrane-spanning segment. The Extracellular segment spans residues 48–58 (CLQHVSHHFRH). Residues 59–79 (FFFFTFYTGYPLWGAVFFISS) traverse the membrane as a helical segment. Residues 80-97 (GSLTVAAGRNPTRMLMQN) are Cytoplasmic-facing. Residues 98-118 (SFGINIASTTIAFVGTVFLSV) traverse the membrane as a helical segment. The Extracellular segment spans residues 119–148 (HLAFNTQAFKGCQSSPSPDVCISLGSSSDG). The helical transmembrane segment at 149–169 (LVSLMLILTLLELSVTISISA) threads the bilayer. Topologically, residues 170–213 (MWCLGNVCGLREAITSPPNSVESGILPEGSDSENLNTQPQASEE) are cytoplasmic. The tract at residues 189–213 (SVESGILPEGSDSENLNTQPQASEE) is disordered. The segment covering 201-213 (SENLNTQPQASEE) has biased composition (polar residues).

It belongs to the MS4A family. As to quaternary structure, interacts with CDKN3. Interacts with CDKN3-CDK2 complexes through its binding to CDKN3; this interaction facilitates dissociation of cyclin A from CDKN3-CDK2 complexes. Expressed at low levels only in specific immune tissues, such as, spleen, bone marrow and peripheral blood leukocytes.

The protein localises to the membrane. Functionally, hematopoietic modulator for the G1-S cell cycle transition. Modulates the level of phosphorylation of cyclin-dependent kinase 2 (CDK2) through its direct binding to cyclin-dependent kinase inhibitor 3 (CDKN3/KAP). The sequence is that of Membrane-spanning 4-domains subfamily A member 3 (Ms4a3) from Mus musculus (Mouse).